We begin with the raw amino-acid sequence, 657 residues long: Tyramine beta-hydroxylase (657 aa).

The chain crosses the membrane as a helical span at residues 77 to 97 (VALLFLLVAYCGGVVHAGEIV). The 112-residue stretch at 103–214 (TNVTVKWHTD…GTTQFYIAAS (112 aa)) folds into the DOMON domain. Asn-104 and Asn-143 each carry an N-linked (GlcNAc...) asparagine glycan. The active site involves Tyr-278. 2 disulfides stabilise this stretch: Cys-280-Cys-330 and Cys-319-Cys-342. Cu(2+)-binding residues include His-312 and His-313. Positions 380, 458, 460, and 533 each coordinate Cu(2+). Intrachain disulfides connect Cys-437-Cys-549, Cys-441-Cys-606, and Cys-512-Cys-534. His-458 is a catalytic residue. An N-linked (GlcNAc...) asparagine glycan is attached at Asn-555.

Belongs to the copper type II ascorbate-dependent monooxygenase family. Cu(2+) serves as cofactor. In terms of tissue distribution, present in synaptic regions of RIC interneurons. Present in gonadal sheath cells of hermaphrodites (at protein level).

The protein localises to the membrane. It catalyses the reaction tyramine + L-ascorbate + O2 = (R)-octopamine + L-dehydroascorbate + H2O. In terms of biological role, required for the conversion of tyramine to octopamine, a precursor of octapamine but probably itself a neurotransmitter. Involved in the regulation of egg laying, which is inhibited by tyramine. Due to its involvement in octopamine biosynthesis, also required for crtc-1-dependent regulation of AMPK-mediated longevity. In Caenorhabditis elegans, this protein is Tyramine beta-hydroxylase.